A 212-amino-acid chain; its full sequence is Thymidylate kinase (212 aa).

11–18 (GGEGVGKS) is an ATP binding site.

This sequence belongs to the thymidylate kinase family.

It catalyses the reaction dTMP + ATP = dTDP + ADP. Phosphorylation of dTMP to form dTDP in both de novo and salvage pathways of dTTP synthesis. The chain is Thymidylate kinase from Chromohalobacter salexigens (strain ATCC BAA-138 / DSM 3043 / CIP 106854 / NCIMB 13768 / 1H11).